The chain runs to 84 residues: Polcalcin Nic t 1 (84 aa).

2 consecutive EF-hand domains span residues 6 to 40 and 41 to 76; these read QDIA…MLGS and VTSE…NRGL. Ca(2+) contacts are provided by Asp-19, Asn-21, Asp-23, Lys-25, Glu-30, Asp-54, Asp-56, Asp-58, and Glu-65.

The polypeptide is Polcalcin Nic t 1 (Nict1) (Nicotiana tabacum (Common tobacco)).